The primary structure comprises 389 residues: Chalcone synthase A (389 aa).

Residue C164 is part of the active site.

The protein belongs to the thiolase-like superfamily. Chalcone/stilbene synthases family. In terms of tissue distribution, major expressed member of the gene family in various floral tissues and in seedlings treated with UV light. It is relatively low expressed in tissue culture material.

It carries out the reaction (E)-4-coumaroyl-CoA + 3 malonyl-CoA + 3 H(+) = 2',4,4',6'-tetrahydroxychalcone + 3 CO2 + 4 CoA. Its pathway is secondary metabolite biosynthesis; flavonoid biosynthesis. Functionally, the primary product of this enzyme is 4,2',4',6'-tetrahydroxychalcone (also termed naringenin-chalcone or chalcone) which can under specific conditions spontaneously isomerize into naringenin. The protein is Chalcone synthase A (CHSA) of Petunia hybrida (Petunia).